The chain runs to 97 residues: Defensin alpha 4 (97 aa).

The signal sequence occupies residues 1 to 19 (MRIIAILAAILLVALQVRA). Positions 20–63 (GPLQARGDEAPGQEQRGPEDQDISISFAWDKSSALQVSGSTRGM) are excised as a propeptide. Disulfide bonds link C65-C93, C67-C82, and C72-C92. D97 is a propeptide.

Belongs to the alpha-defensin family. As to quaternary structure, homodimer; homodimerization seems to be required for killing S.aureus, but not E.coli. Interacts with CD4. Interacts with Bacillus anthracis lef; homodimerization is required for the interaction. In terms of processing, the three-dimensional structure formed by the three intramolecular disulfide bridges is indispensable for effective bacterial killing.

Its subcellular location is the secreted. The protein resides in the cytoplasmic vesicle. It localises to the secretory vesicle. Host-defense peptide that has antimicrobial activity against Gram-negative bacteria, and to a lesser extent also against Gram-positive bacteria and fungi. Exhibits antimicrobial activity against Gram-negative E.coli and E.aerogenes and Gram-positive S.faecalis, S.aureus and B.cereus and the yeast C.albicans (in vitro). Inhibits corticotropin (ACTH)-stimulated corticosterone production (in vitro). Inhibits enzymatic activity of B.anthracis lef/anthrax lethal factor (in vitro). The polypeptide is Defensin alpha 4 (DEFA4) (Pan troglodytes (Chimpanzee)).